Here is a 931-residue protein sequence, read N- to C-terminus: Isoleucine--tRNA ligase (931 aa).

The short motif at 57–67 (PFANGNIHMGH) is the 'HIGH' region element. Glu556 serves as a coordination point for L-isoleucyl-5'-AMP. A 'KMSKS' region motif is present at residues 597-601 (KMSKS). Lys600 is a binding site for ATP. 4 residues coordinate Zn(2+): Cys890, Cys893, Cys910, and Cys913.

This sequence belongs to the class-I aminoacyl-tRNA synthetase family. IleS type 1 subfamily. In terms of assembly, monomer. Requires Zn(2+) as cofactor.

It is found in the cytoplasm. The catalysed reaction is tRNA(Ile) + L-isoleucine + ATP = L-isoleucyl-tRNA(Ile) + AMP + diphosphate. In terms of biological role, catalyzes the attachment of isoleucine to tRNA(Ile). As IleRS can inadvertently accommodate and process structurally similar amino acids such as valine, to avoid such errors it has two additional distinct tRNA(Ile)-dependent editing activities. One activity is designated as 'pretransfer' editing and involves the hydrolysis of activated Val-AMP. The other activity is designated 'posttransfer' editing and involves deacylation of mischarged Val-tRNA(Ile). This Lactobacillus delbrueckii subsp. bulgaricus (strain ATCC 11842 / DSM 20081 / BCRC 10696 / JCM 1002 / NBRC 13953 / NCIMB 11778 / NCTC 12712 / WDCM 00102 / Lb 14) protein is Isoleucine--tRNA ligase.